The following is a 431-amino-acid chain: Serine hydroxymethyltransferase (431 aa).

(6S)-5,6,7,8-tetrahydrofolate-binding positions include L126 and 130 to 132; that span reads GHL. K235 carries the N6-(pyridoxal phosphate)lysine modification.

It belongs to the SHMT family. As to quaternary structure, homodimer. It depends on pyridoxal 5'-phosphate as a cofactor.

It is found in the cytoplasm. The catalysed reaction is (6R)-5,10-methylene-5,6,7,8-tetrahydrofolate + glycine + H2O = (6S)-5,6,7,8-tetrahydrofolate + L-serine. Its pathway is one-carbon metabolism; tetrahydrofolate interconversion. It participates in amino-acid biosynthesis; glycine biosynthesis; glycine from L-serine: step 1/1. Functionally, catalyzes the reversible interconversion of serine and glycine with tetrahydrofolate (THF) serving as the one-carbon carrier. This reaction serves as the major source of one-carbon groups required for the biosynthesis of purines, thymidylate, methionine, and other important biomolecules. Also exhibits THF-independent aldolase activity toward beta-hydroxyamino acids, producing glycine and aldehydes, via a retro-aldol mechanism. In Nocardia farcinica (strain IFM 10152), this protein is Serine hydroxymethyltransferase.